The chain runs to 1324 residues: Ubiquitin carboxyl-terminal hydrolase 42 (1324 aa).

Disordered stretches follow at residues 1–38 and 63–87; these read MTIV…SASW and YSSS…DGIA. The span at 10–25 shows a compositional bias: polar residues; the sequence is SSDPSAYQNQPGSSEA. Over residues 63–80 the composition is skewed to low complexity; it reads YSSSSVPDKSKPSPQKDQ. Phosphoserine is present on S75. The USP domain maps to 111–412; that stretch reads AGLQNLGNTC…QAYVLFYIRS (302 aa). Catalysis depends on C120, which acts as the Nucleophile. Residue H371 is the Proton acceptor of the active site. 6 disordered regions span residues 452–494, 536–707, 722–1026, 1085–1131, 1149–1254, and 1275–1294; these read IGPQ…NRAS, QSQP…MPAP, LSNK…RHRS, RAGL…HPDR, DRFH…VKDS, and GGFP…FREK. A compositionally biased stretch (low complexity) spans 477–489; sequence PSSSMSSPNGNSS. S483 carries the phosphoserine modification. Residues 536 to 564 are compositionally biased toward polar residues; sequence QSQPNLHSNSLENPTKPVPSSTITNSAVQ. Low complexity predominate over residues 565–576; the sequence is STSNASTMSVSS. Over residues 586 to 603 the composition is skewed to polar residues; sequence ESCSQPVMNGKSKLNSSV. Phosphoserine is present on residues S754 and S856. Basic and acidic residues-rich tracts occupy residues 938 to 974, 984 to 1013, 1101 to 1113, 1149 to 1158, and 1165 to 1191; these read AKEK…SKTE, CPRE…ERRS, RGCE…ERHR, DRFHEHENGK, and DSVE…EEPK. Residue S1181 is modified to Phosphoserine. Positions 1192–1206 are enriched in basic residues; sequence AKKHKKSKKKKKSKD. Basic and acidic residues predominate over residues 1207–1218; it reads KHRDRDSRHQQD. Residues S1219, S1222, and S1226 each carry the phosphoserine modification. Residues 1231-1245 show a composition bias toward basic residues; it reads HRHKKKKKKKKRHSR. The residue at position 1247 (S1247) is a Phosphoserine.

Belongs to the peptidase C19 family. In terms of tissue distribution, broadly expressed.

It carries out the reaction Thiol-dependent hydrolysis of ester, thioester, amide, peptide and isopeptide bonds formed by the C-terminal Gly of ubiquitin (a 76-residue protein attached to proteins as an intracellular targeting signal).. Functionally, deubiquitinating enzyme which may play an important role during spermatogenesis. The chain is Ubiquitin carboxyl-terminal hydrolase 42 (USP42) from Homo sapiens (Human).